The sequence spans 226 residues: Ornithine decarboxylase antizyme (226 aa).

It belongs to the ODC antizyme family. As to quaternary structure, interacts with ODC and thereby sterically blocks ODC homodimerization.

In terms of biological role, ornithine decarboxylase (ODC) antizyme protein that negatively regulates ODC activity and intracellular polyamine biosynthesis in response to increased intracellular polyamine levels. Binds to ODC monomers, inhibiting the assembly of the functional ODC homodimer, and targets the monomers for ubiquitin-independent proteolytic destruction by the 26S proteasome. In Schizosaccharomyces pombe (strain 972 / ATCC 24843) (Fission yeast), this protein is Ornithine decarboxylase antizyme (spa1).